The following is a 148-amino-acid chain: IQ domain-containing protein F5 (148 aa).

IQ domains are found at residues 11-40 (ETSAAVRIQAWWRGTLLRRTLLHAALSAWI) and 67-96 (KTWAIVKLQSWFRMWHIRHRYCRLLNAVRI).

This is IQ domain-containing protein F5 (Iqcf5) from Mus musculus (Mouse).